The following is an 849-amino-acid chain: METIDSKQNINRESLLEERRKKLAKWKQKKAQFDAQKENQTSRNDIVTNSLEGKQTTEKFTERQERVKEELRKRKNEFRKSDEPVSVKPSKKKSKRSKVKKKISFDFSDDDDSEIGVSFRSKEHIQKVPEHDNEKDPLDEFMTSLKEEKMSNSKGMYDRGDILDVEDQLFELGGTDDEDVEDNTDNSNIAKIAKLKAKKRVKQIYYSPEELEPFQKNFYIESETVSSMSEMEVEELRLSLDNIKIKGTGCPKPVTKWSQLGLSTDTMVLITEKLHFGSLTPIQSQALPAIMSGRDVIGISKTGSGKTISYLLPLLRQVKAQRPLSKHETGPMGLILAPTRELALQIHEEVTKFTEADTSIRSVCCTGGSEMKKQITDLKRGTEIVVATPGRFIDILTLNDGKLLSTKRITFVVMDEADRLFDLGFEPQITQIMKTVRPDKQCVLFSATFPNKLRSFAVRVLHSPISITINSKGMVNENVKQKFRICHSEDEKFDNLVQLIHERSEFFDEVQSENDGQSSDVEEVDAKAIIFVSSQNICDFISKKLLNAGIVTCAIHAGKPYQERLMNLEKFKREKNSILLCTEVLSRGLNVPEVSLVIIYNAVKTFAQYVHTTGRTARGSRSGTAITLLLHDELSGAYILSKAMRDEEIKALDPLQAKELQEMSAKFESGMKKGKFRLSKGFGGKGLENIKSKREEAQNKDLELKKNDKRSDDLEKKINNPHEGHDSEPESSALIPRLNYELFKESTDGSIIFYAKVYINDLPQIVRWEATKNTTLLFIKHETGCSITNKGKFYPEGKEPKNENDEPKLYLLIEGQDEKDIQLSIELLEQKVKEGVVKAASLSLKSTKY.

The stretch at 13-81 forms a coiled coil; it reads ESLLEERRKK…RKRKNEFRKS (69 aa). The tract at residues 28 to 138 is disordered; that stretch reads QKKAQFDAQK…PEHDNEKDPL (111 aa). The span at 38–54 shows a compositional bias: polar residues; the sequence is ENQTSRNDIVTNSLEGK. Basic and acidic residues predominate over residues 55–85; that stretch reads QTTEKFTERQERVKEELRKRKNEFRKSDEPV. Residues 89–102 are compositionally biased toward basic residues; the sequence is PSKKKSKRSKVKKK. Over residues 120–138 the composition is skewed to basic and acidic residues; sequence RSKEHIQKVPEHDNEKDPL. The short motif at 255–284 is the Q motif element; sequence TKWSQLGLSTDTMVLITEKLHFGSLTPIQS. In terms of domain architecture, Helicase ATP-binding spans 287 to 467; that stretch reads LPAIMSGRDV…VRVLHSPISI (181 aa). Residue 300–307 participates in ATP binding; sequence SKTGSGKT. The DEAD box motif lies at 415–418; sequence DEAD. The Helicase C-terminal domain occupies 502-661; it reads ERSEFFDEVQ…LDPLQAKELQ (160 aa). The span at 689-728 shows a compositional bias: basic and acidic residues; it reads NIKSKREEAQNKDLELKKNDKRSDDLEKKINNPHEGHDSE. The interval 689–731 is disordered; sequence NIKSKREEAQNKDLELKKNDKRSDDLEKKINNPHEGHDSEPES.

Belongs to the DEAD box helicase family. DDX46/PRP5 subfamily. Interacts with the U2 snRNP and HSH155.

It localises to the nucleus. The enzyme catalyses ATP + H2O = ADP + phosphate + H(+). ATP-dependent RNA helicase involved spliceosome assembly and in nuclear splicing. Catalyzes an ATP-dependent conformational change of U2 snRNP. Bridges U1 and U2 snRNPs and enables stable U2 snRNP association with intron RNA. This is Pre-mRNA-processing ATP-dependent RNA helicase PRP5 (PRP5) from Saccharomyces cerevisiae (strain YJM789) (Baker's yeast).